Reading from the N-terminus, the 1696-residue chain is PH domain leucine-rich repeat protein phosphatase 1 (1696 aa).

An N-acetylmethionine modification is found at Met1. Disordered regions lie at residues 1–97 (MEPA…GGGA) and 222–398 (LGHG…VVGE). Residues 79-92 (VPQPAAGGAAPVTA) show a composition bias toward low complexity. Residues 313–325 (DTESFSLSPSAES) show a composition bias toward polar residues. Residue Ser378 is modified to Phosphoserine. Residues 499–599 (RIQLSGMYNV…WLRQVSKVAS (101 aa)) enclose the PH domain. LRR repeat units lie at residues 601–622 (RISSVDLSCCSLEHLPANLFYS), 624–645 (DLTHLNLKQNFLRQNPSLPAAR), 655–676 (KLKSLNLSNNHLGAFPSAVCSI), 678–699 (TLAELNVSCNALQEVPAAVGAM), 701–722 (NLQTFLLDGNFLQSLPAELENM), 724–746 (QLSYLGLSFNEFTDIPEVLEKLT), 836–857 (FLKALYASSNELVQLDVYPVPN), 858–879 (YLSYMDVSRNCLESVPEWVCES), 881–902 (KLEVLDIGHNQICELPARLFCN), 904–925 (SLRKLLAGHNRLARLPERLERT), 926–947 (SVEVLDVQHNQIIELPPNLLMK), 950–971 (SLRFLNASANKLETLPPATLSE), 976–996 (ILQELYLTNNSLTDKCVPLLT), 1000–1021 (RLKILHMAYNRLQSFPASKMAK), 1024–1045 (ELEEIDISGNKLKAIPTTIMNC), 1047–1068 (RMHTVIAHSNCIEVFPEVMQLP), 1069–1090 (EVKCVDLSCNELSEITLPENLP), and 1092–1113 (KLQELDLTGNPRLALDHKSLEL). In terms of domain architecture, PPM-type phosphatase spans 1138–1385 (SHGYTEASGV…DSISAVVVQL (248 aa)). Asp1173, Gly1174, Lys1337, and Asp1376 together coordinate Mn(2+). 2 disordered regions span residues 1422-1473 (RPSD…SPAY) and 1610-1696 (KPGG…DTPL). Low complexity-rich tracts occupy residues 1431-1452 (SSSSGMASEISSELSTSEMSSE), 1647-1660 (QQQQQQQQQQQQQQ), and 1670-1680 (QAQAQAQAQAQ). The short motif at 1694 to 1696 (TPL) is the PDZ-binding element.

In terms of assembly, interacts with the nucleotide free form of K-Ras (KRAS) via its LRR repeats. Interacts with AKT2, AKT3 and PRKCB isoform beta-II. Interacts with WDR48 and USP12. It depends on Mn(2+) as a cofactor. In terms of tissue distribution, mainly present in brain (at protein level). Isoform 2 is more abundant in adult brain neurons than isoform 1 in. Isoforms 1 and 2 are expressed in the retina but not found in rod outer segments.

Its subcellular location is the cytoplasm. The protein resides in the membrane. It is found in the cell membrane. The protein localises to the nucleus. It localises to the nucleoplasm. Its subcellular location is the nucleus membrane. It carries out the reaction O-phospho-L-seryl-[protein] + H2O = L-seryl-[protein] + phosphate. It catalyses the reaction O-phospho-L-threonyl-[protein] + H2O = L-threonyl-[protein] + phosphate. Its activity is regulated as follows. Insensitive to okadaic acid. Deubiquitination by WDR48-USP12 complex positively regulates PHLPP1 stability. Protein phosphatase involved in regulation of Akt and PKC signaling. Mediates dephosphorylation in the C-terminal domain hydrophobic motif of members of the AGC Ser/Thr protein kinase family; specifically acts on 'Ser-473' of AKT2 and AKT3, 'Ser-660' of PRKCB and 'Ser-657' of PRKCA. Isoform 2 seems to have a major role in regulating Akt signaling in hippocampal neurons while isoform 1 may promote Akt and PKC activation and inhibit ERK signaling. Akt regulates the balance between cell survival and apoptosis through a cascade that primarily alters the function of transcription factors that regulate pro- and antiapoptotic genes. Dephosphorylation of 'Ser-473' of Akt triggers apoptosis and suppression of tumor growth. Dephosphorylation of PRKCA and PRKCB leads to their destabilization and degradation. Dephosphorylates STK4 on 'Thr-387' leading to STK4 activation and apoptosis. Dephosphorylates RPS6KB1 and is involved in regulation of cap-dependent translation. Inhibits cancer cell proliferation and may act as a tumor suppressor. Dephosphorylates RAF1 inhibiting its kinase activity. May act as a negative regulator of K-Ras signaling in membrane rafts. Involved in the hippocampus-dependent long-term memory formation. Involved in circadian control by regulating the consolidation of circadian periodicity after resetting. Involved in development and function of regulatory T-cells. This is PH domain leucine-rich repeat protein phosphatase 1 (Phlpp1) from Rattus norvegicus (Rat).